The primary structure comprises 233 residues: ATP synthase subunit a (233 aa).

5 helical membrane-spanning segments follow: residues 29-49 (FKHV…GLIV), 86-106 (VFPL…LGLV), 118-135 (TNAA…YQGL), 188-208 (VLFF…LFLL), and 209-229 (GKVL…KGAF).

This sequence belongs to the ATPase A chain family. As to quaternary structure, F-type ATPases have 2 components, CF(1) - the catalytic core - and CF(0) - the membrane proton channel. CF(1) has five subunits: alpha(3), beta(3), gamma(1), delta(1), epsilon(1). CF(0) has three main subunits: a(1), b(2) and c(9-12). The alpha and beta chains form an alternating ring which encloses part of the gamma chain. CF(1) is attached to CF(0) by a central stalk formed by the gamma and epsilon chains, while a peripheral stalk is formed by the delta and b chains.

Its subcellular location is the cell inner membrane. In terms of biological role, key component of the proton channel; it plays a direct role in the translocation of protons across the membrane. This is ATP synthase subunit a from Nitratidesulfovibrio vulgaris (strain ATCC 29579 / DSM 644 / CCUG 34227 / NCIMB 8303 / VKM B-1760 / Hildenborough) (Desulfovibrio vulgaris).